Consider the following 308-residue polypeptide: HGNGYNSNNGNGYNSNNGNGYNSNNNGNTNCNFGNCNNANSFNNNGNTNSLNGNNNGNSNNNGNGNNNGNSNNNGNGNNNGNTNNGNSYDSNTNDDSNSIPNAVSVGGSNKLVIKTKSDDSSQTISLLDVFKNYDSNNNGNSNNNGSSYNRNDNGNSYNSNNNGNSYNRNDNGNSYNSNNNGNSYNRNDNGNSYNRNDNGNSYNSNNNGNTNSFNNNGNTNSFNNNGDTNRIDSNSYNSNNNGDNSNTNSVLVPEPTVIVIPAPVQQSVGCVCKPDYDPLLYTDNETYNNKCEAECEGKTVWYDKACY.

3 disordered regions span residues 1–21, 47–104, and 134–250; these read HGNG…GNGY, NTNS…PNAV, and YDSN…NTNS. Over residues 47–99 the composition is skewed to low complexity; sequence NTNSLNGNNNGNSNNNGNGNNNGNSNNNGNGNNNGNTNNGNSYDSNTNDDSNS.

In terms of tissue distribution, component of the acid-insoluble organic matrix of the calcified shell.

It localises to the secreted. This chain is Insoluble matrix shell protein 4, found in Ruditapes philippinarum (Japanese carpet shell).